A 1150-amino-acid polypeptide reads, in one-letter code: PAN2-PAN3 deadenylation complex catalytic subunit PAN2 (1150 aa).

WD repeat units follow at residues 26-67 (AHHS…MEFQ), 114-156 (GHVN…ITKE), 158-194 (PAPN…VINT), and 290-328 (GHTH…VSFV). Residues 326-471 (SFVDQGLPVE…IRTDIESLKS (146 aa)) form a linker region. The USP domain maps to 472–862 (VVPNMYHLFE…TPLVVMFQLK (391 aa)). The Exonuclease domain maps to 911–1079 (AIDAEFVLAK…HDSIEDANTA (169 aa)). Residues D913, E915, D1022, and D1075 each coordinate a divalent metal cation. The disordered stretch occupies residues 1118–1150 (GQSAQRTETPPMVDDAQPGALLPYQPPELLQGS).

Belongs to the peptidase C19 family. PAN2 subfamily. In terms of assembly, forms a heterotrimer with an asymmetric homodimer of the regulatory subunit PAN3 to form the poly(A)-nuclease (PAN) deadenylation complex. Requires a divalent metal cation as cofactor.

Its subcellular location is the cytoplasm. It carries out the reaction Exonucleolytic cleavage of poly(A) to 5'-AMP.. Positively regulated by the regulatory subunit PAN3. Its function is as follows. Catalytic subunit of the poly(A)-nuclease (PAN) deadenylation complex, one of two cytoplasmic mRNA deadenylases involved in mRNA turnover. PAN specifically shortens poly(A) tails of RNA and the activity is stimulated by poly(A)-binding protein PAB1. PAN deadenylation is followed by rapid degradation of the shortened mRNA tails by the CCR4-NOT complex. Deadenylated mRNAs are then degraded by two alternative mechanisms, namely exosome-mediated 3'-5' exonucleolytic degradation, or deadenylation-dependent mRNA decaping and subsequent 5'-3' exonucleolytic degradation by XRN1. May also be involved in post-transcriptional maturation of mRNA poly(A) tails. This Pyricularia oryzae (strain 70-15 / ATCC MYA-4617 / FGSC 8958) (Rice blast fungus) protein is PAN2-PAN3 deadenylation complex catalytic subunit PAN2.